We begin with the raw amino-acid sequence, 686 residues long: Alpha-amylase 1 (686 aa).

Glu125 (nucleophile) is an active-site residue. The active-site Proton donor is the Asp216.

This sequence belongs to the glycosyl hydrolase 57 family.

The protein resides in the cytoplasm. The enzyme catalyses Endohydrolysis of (1-&gt;4)-alpha-D-glucosidic linkages in polysaccharides containing three or more (1-&gt;4)-alpha-linked D-glucose units.. Functionally, this amylase is a highly liquefying-type: oligomers appeared at the beginning of incubation, followed by a graded decrease in the amounts of maltotriose, maltose and glucose in prolonged incubation. This chain is Alpha-amylase 1 (amyA), found in Dictyoglomus thermophilum (strain ATCC 35947 / DSM 3960 / H-6-12).